Consider the following 148-residue polypeptide: Large ribosomal subunit protein uL22c (148 aa).

The protein belongs to the universal ribosomal protein uL22 family. In terms of assembly, part of the 50S ribosomal subunit.

The protein resides in the plastid. Its subcellular location is the chloroplast. This protein binds specifically to 23S rRNA. Functionally, the globular domain of the protein is located near the polypeptide exit tunnel on the outside of the subunit, while an extended beta-hairpin is found that lines the wall of the exit tunnel in the center of the 70S ribosome. The sequence is that of Large ribosomal subunit protein uL22c (rpl22) from Triticum aestivum (Wheat).